A 186-amino-acid chain; its full sequence is Negative modulator of initiation of replication (186 aa).

The protein belongs to the SeqA family. Homodimer. Polymerizes to form helical filaments.

The protein localises to the cytoplasm. Negative regulator of replication initiation, which contributes to regulation of DNA replication and ensures that replication initiation occurs exactly once per chromosome per cell cycle. Binds to pairs of hemimethylated GATC sequences in the oriC region, thus preventing assembly of replication proteins and re-initiation at newly replicated origins. Repression is relieved when the region becomes fully methylated. The chain is Negative modulator of initiation of replication from Haemophilus ducreyi (strain 35000HP / ATCC 700724).